A 96-amino-acid polypeptide reads, in one-letter code: uncharacterized protein (96 aa).

The protein resides in the mitochondrion. This is an uncharacterized protein from Saccharomyces cerevisiae (strain ATCC 204508 / S288c) (Baker's yeast).